The sequence spans 145 residues: Small t antigen (145 aa).

The region spanning 6-82 (RLTELLCLPV…PEESGYATFE (77 aa)) is the J domain. The tract at residues 58–80 (EGLRADETLEDSDPEPEESGYAT) is disordered. Acidic residues predominate over residues 65–75 (TLEDSDPEPEE).

As to quaternary structure, interacts with host PPP2R1A; the interaction inhibits PP2A activity.

It is found in the host cytoplasm. It localises to the host nucleus. In terms of biological role, promotes efficient viral genome replication by accelerating both G1 and S phase progression of the cell cycle. This chain is Small t antigen, found in Budgerigar fledgling disease virus (BFPyV).